Here is a 237-residue protein sequence, read N- to C-terminus: Purine nucleoside phosphorylase DeoD-type (237 aa).

His4 is a binding site for a purine D-ribonucleoside. Phosphate contacts are provided by residues Gly20, Arg24, Arg43, and 87–90; that span reads RVGT. Residues 179–181 and 203–204 contribute to the a purine D-ribonucleoside site; these read EME and SD. Asp204 (proton donor) is an active-site residue.

This sequence belongs to the PNP/UDP phosphorylase family. Homohexamer; trimer of homodimers.

The enzyme catalyses a purine D-ribonucleoside + phosphate = a purine nucleobase + alpha-D-ribose 1-phosphate. The catalysed reaction is a purine 2'-deoxy-D-ribonucleoside + phosphate = a purine nucleobase + 2-deoxy-alpha-D-ribose 1-phosphate. Functionally, catalyzes the reversible phosphorolytic breakdown of the N-glycosidic bond in the beta-(deoxy)ribonucleoside molecules, with the formation of the corresponding free purine bases and pentose-1-phosphate. The chain is Purine nucleoside phosphorylase DeoD-type from Streptococcus gordonii (strain Challis / ATCC 35105 / BCRC 15272 / CH1 / DL1 / V288).